Consider the following 775-residue polypeptide: Mitosis inducer protein kinase cdr2 (775 aa).

Residues 10–262 (WELGLSLGSG…MEQIREHPFL (253 aa)) enclose the Protein kinase domain. Residues 16 to 24 (LGSGGPNSS) and Lys39 each bind ATP. Catalysis depends on Asp133, which acts as the Proton acceptor. A phosphoserine mark is found at Ser309, Ser311, and Ser476. Residues 549–563 (NNIDNNNYNQPYANA) show a composition bias toward low complexity. Residues 549–620 (NNIDNNNYNQ…TKKKLSGSPF (72 aa)) are disordered. The segment covering 584 to 593 (LSQSPASYDS) has biased composition (polar residues). A phosphoserine mark is found at Ser587 and Ser632.

The protein belongs to the protein kinase superfamily. CAMK Ser/Thr protein kinase family. NIM1 subfamily. Interacts with blt1 and mid1. In terms of processing, autophosphorylated.

It carries out the reaction L-seryl-[protein] + ATP = O-phospho-L-seryl-[protein] + ADP + H(+). It catalyses the reaction L-threonyl-[protein] + ATP = O-phospho-L-threonyl-[protein] + ADP + H(+). Functionally, acts as a mitotic inducer. In G2 it negatively regulates wee1, a mitotic inhibitor. Also has a role in cytokinesis where it required for proper septum formation. This is Mitosis inducer protein kinase cdr2 (cdr2) from Schizosaccharomyces pombe (strain 972 / ATCC 24843) (Fission yeast).